Consider the following 313-residue polypeptide: uncharacterized protein (313 aa).

Helical transmembrane passes span 31 to 53, 62 to 84, 104 to 126, 147 to 161, 166 to 185, 198 to 220, 225 to 244, 264 to 282, and 286 to 308; these read AWGI…GWLF, LFLF…WNPY, VFFW…IYTS, FALL…NQSV, SMFW…SFLL, RVLK…ALRF, SFSG…YLII, FFAA…TSSF, and PAAM…SILI.

It localises to the cell membrane. This is an uncharacterized protein from Archaeoglobus fulgidus (strain ATCC 49558 / DSM 4304 / JCM 9628 / NBRC 100126 / VC-16).